The sequence spans 183 residues: MSPERRPADIRRATEADMPAVCTIVNHYIETSTVNFRTEPQEPQEWTDDLVRLRERYPWLVAEVDGEVAGIAYAGPWKARNAYDWTAESTVYVSPRHQRTGLGSTLYTHLLKSLEAQGFKSVVAVIGLPNDPSVRMHEALGYAPRGMLRAAGFKHGNWHDVGFWQLDFSLPVPPRPVLPVTEI.

The 166-residue stretch at 8-173 (ADIRRATEAD…WQLDFSLPVP (166 aa)) folds into the N-acetyltransferase domain. Residues 91 to 93 (VYV), 99 to 104 (RTGLGS), and Asn130 contribute to the acetyl-CoA site.

This sequence belongs to the acetyltransferase family. PAT/BAR subfamily.

The enzyme catalyses phosphinothricin + acetyl-CoA = N-acetylphosphinothricin + CoA + H(+). Its function is as follows. Inactivates phosphinothricin (PPT) by transfer of an acetyl group from acetyl CoA. Can also acetylate demethylphosphinothricin but not PTT or glutamate. This enzyme is an effector of phosphinothricin tripeptide (PTT or bialaphos) resistance. In Streptomyces hygroscopicus, this protein is Phosphinothricin N-acetyltransferase.